Consider the following 106-residue polypeptide: Large ribosomal subunit protein P1A (106 aa).

Residue Ser-2 is modified to N-acetylserine. The tract at residues 73–106 is disordered; that stretch reads GGVAGGEAGEAEAEKEEEEAKEESDDDMGFGLFD. Acidic residues predominate over residues 81–100; the sequence is GEAEAEKEEEEAKEESDDDM. Ser-96 is subject to Phosphoserine.

It belongs to the eukaryotic ribosomal protein P1/P2 family. Component of the large ribosomal subunit (LSU). Mature yeast ribosomes consist of a small (40S) and a large (60S) subunit. The 40S small subunit contains 1 molecule of ribosomal RNA (18S rRNA) and 33 different proteins (encoded by 57 genes). The large 60S subunit contains 3 rRNA molecules (25S, 5.8S and 5S rRNA) and 46 different proteins (encoded by 81 genes). The 5 acidic ribosomal P-proteins form the stalk structure of the 60S subunit. They are organized as a pentameric complex in which uL10/P0 interacts with 2 heterodimers, P1A-P2B and P1B-P2A. N-terminally acetylated by acetyltransferase NatA.

Its subcellular location is the cytoplasm. Functionally, component of the ribosome, a large ribonucleoprotein complex responsible for the synthesis of proteins in the cell. The small ribosomal subunit (SSU) binds messenger RNAs (mRNAs) and translates the encoded message by selecting cognate aminoacyl-transfer RNA (tRNA) molecules. The large subunit (LSU) contains the ribosomal catalytic site termed the peptidyl transferase center (PTC), which catalyzes the formation of peptide bonds, thereby polymerizing the amino acids delivered by tRNAs into a polypeptide chain. The nascent polypeptides leave the ribosome through a tunnel in the LSU and interact with protein factors that function in enzymatic processing, targeting, and the membrane insertion of nascent chains at the exit of the ribosomal tunnel. This Saccharomyces cerevisiae (strain ATCC 204508 / S288c) (Baker's yeast) protein is Large ribosomal subunit protein P1A.